Reading from the N-terminus, the 37-residue chain is Large ribosomal subunit protein bL36 (37 aa).

Belongs to the bacterial ribosomal protein bL36 family.

This Nitratiruptor sp. (strain SB155-2) protein is Large ribosomal subunit protein bL36.